The sequence spans 460 residues: EPD1-interacting receptor-like cytoplasmic serine/threonine-protein kinase 5D (460 aa).

The region spanning 83 to 364 (FSSANFLGEG…DVVNILEPLL (282 aa)) is the Protein kinase domain. ATP contacts are provided by residues 89–97 (LGEGGFGPV) and lysine 118. Phosphotyrosine is present on residues tyrosine 163 and tyrosine 165. Aspartate 213 (proton acceptor) is an active-site residue.

It belongs to the protein kinase superfamily. Ser/Thr protein kinase family. In terms of assembly, interacts with the V.dahliae elicitor EPD1 (AC G2WWH6). Post-translationally, phosphorylated at Tyr-163 and Tyr-165 in the presence of pathogen-associated molecular patterns (PAMPs); this triggers the expression of pathogenesis-related genes. Mostly expressed in roots and, to a lesser extent, in leaves.

It localises to the cell membrane. It catalyses the reaction L-seryl-[protein] + ATP = O-phospho-L-seryl-[protein] + ADP + H(+). The enzyme catalyses L-threonyl-[protein] + ATP = O-phospho-L-threonyl-[protein] + ADP + H(+). Its function is as follows. Required for pathogen-associated molecular pattern (PAMP, e.g. chitin and flg22)-triggered immunity (PTI) involving reactive oxygen species (ROS) accumulation and triggering plant defense, including defense-related gene expression (e.g. PR1 and LOX). Ensures specific recognition of the EPD1 effector of Verticillium dahliae, resulting in a hypersensitive response known as effector-triggered immunity (ETI), characterized by the activation of programmed cell death to limit infection by the pathogen. Priming plants with the incompatible pathogen V.dahliae leads to an increased resistance to compatible pathogens, as a result of systemic acquired resistance (SAR). In Gossypium barbadense (Sea Island cotton), this protein is EPD1-interacting receptor-like cytoplasmic serine/threonine-protein kinase 5D.